Consider the following 187-residue polypeptide: uncharacterized protein (187 aa).

Residue G2 is the site of N-myristoyl glycine; by host attachment.

It belongs to the mimivirus L332/L333/L334 family.

This is an uncharacterized protein from Acanthamoeba polyphaga (Amoeba).